The following is a 1254-amino-acid chain: Zinc finger protein BRUTUS-like At1g18910 (1254 aa).

The tract at residues 1-30 (MGVGDPLPLPPEKNRREVNKPPDIASTSSS) is disordered. Residues 454-474 (IHFLPLGLLKCVIMWFSAQLP) traverse the membrane as a helical segment. The CHY-type zinc finger occupies 1013–1082 (PHKLIFGCKH…ASCSNISCSS (70 aa)). Residues cysteine 1020, histidine 1022, cysteine 1033, cysteine 1034, cysteine 1040, cysteine 1043, histidine 1044, histidine 1050, cysteine 1062, cysteine 1065, cysteine 1075, cysteine 1080, cysteine 1089, cysteine 1092, histidine 1103, cysteine 1104, cysteine 1107, cysteine 1110, histidine 1122, cysteine 1123, cysteine 1126, cysteine 1129, histidine 1137, and cysteine 1139 each coordinate Zn(2+). The CTCHY-type zinc finger occupies 1084 to 1147 (MGKYYCKICK…VCREKCLEDN (64 aa)). Residues 1148–1190 (CPICHEYIFTSNSPVKALPCGHVMHSTCFQEYTCSHYTCPICS) form an RING-type; atypical zinc finger.

In terms of assembly, binds zinc and iron ions.

Its subcellular location is the membrane. It is found in the nucleus. Its pathway is protein modification; protein ubiquitination. Functionally, probable E3 ubiquitin-protein ligase that may regulate the response to iron deficiency and thus contributes to iron homeostasis. The chain is Zinc finger protein BRUTUS-like At1g18910 from Arabidopsis thaliana (Mouse-ear cress).